A 302-amino-acid polypeptide reads, in one-letter code: Sulfate adenylyltransferase subunit 2 (302 aa).

The protein belongs to the PAPS reductase family. CysD subfamily. As to quaternary structure, heterodimer composed of CysD, the smaller subunit, and CysN.

It carries out the reaction sulfate + ATP + H(+) = adenosine 5'-phosphosulfate + diphosphate. It functions in the pathway sulfur metabolism; hydrogen sulfide biosynthesis; sulfite from sulfate: step 1/3. With CysN forms the ATP sulfurylase (ATPS) that catalyzes the adenylation of sulfate producing adenosine 5'-phosphosulfate (APS) and diphosphate, the first enzymatic step in sulfur assimilation pathway. APS synthesis involves the formation of a high-energy phosphoric-sulfuric acid anhydride bond driven by GTP hydrolysis by CysN coupled to ATP hydrolysis by CysD. This Yersinia pestis bv. Antiqua (strain Nepal516) protein is Sulfate adenylyltransferase subunit 2.